A 140-amino-acid chain; its full sequence is Large ribosomal subunit protein uL22 (140 aa).

It belongs to the universal ribosomal protein uL22 family. In terms of assembly, part of the 50S ribosomal subunit.

Its function is as follows. This protein binds specifically to 23S rRNA; its binding is stimulated by other ribosomal proteins, e.g. L4, L17, and L20. It is important during the early stages of 50S assembly. It makes multiple contacts with different domains of the 23S rRNA in the assembled 50S subunit and ribosome. In terms of biological role, the globular domain of the protein is located near the polypeptide exit tunnel on the outside of the subunit, while an extended beta-hairpin is found that lines the wall of the exit tunnel in the center of the 70S ribosome. The polypeptide is Large ribosomal subunit protein uL22 (Parafrankia sp. (strain EAN1pec)).